The sequence spans 285 residues: uncharacterized protein (285 aa).

Substrate is bound at residue Ser-168. Tyr-181 serves as the catalytic Proton acceptor.

It belongs to the short-chain dehydrogenases/reductases (SDR) family.

This is an uncharacterized protein from Haemophilus influenzae (strain ATCC 51907 / DSM 11121 / KW20 / Rd).